Here is a 64-residue protein sequence, read N- to C-terminus: Large ribosomal subunit protein bL35 (64 aa).

This sequence belongs to the bacterial ribosomal protein bL35 family.

This Desulforudis audaxviator (strain MP104C) protein is Large ribosomal subunit protein bL35.